A 323-amino-acid polypeptide reads, in one-letter code: Acetyl esterase (323 aa).

The Involved in the stabilization of the negatively charged intermediate by the formation of the oxyanion hole signature appears at 91–93 (HGG). Active-site residues include serine 165, aspartate 262, and histidine 292.

Belongs to the 'GDXG' lipolytic enzyme family. As to quaternary structure, homodimer. Interacts with MalT and MelA.

It localises to the cytoplasm. Its function is as follows. Displays esterase activity towards short chain fatty esters (acyl chain length of up to 8 carbons). Able to hydrolyze triacetylglycerol (triacetin) and tributyrylglycerol (tributyrin), but not trioleylglycerol (triolein) or cholesterol oleate. Negatively regulates MalT activity by antagonizing maltotriose binding. Inhibits MelA galactosidase activity. This is Acetyl esterase from Salmonella paratyphi A (strain ATCC 9150 / SARB42).